Reading from the N-terminus, the 611-residue chain is Class E vacuolar protein-sorting machinery protein hse1 (611 aa).

Residues 16–145 enclose the VHS domain; it reads ATDENLTSEN…KLKTQNPNLQ (130 aa). Disordered stretches follow at residues 140–163 and 182–211; these read QNPNLQPPSKPGKREITDADRQKE and APAPQAEASSSAAPVNQTQAPAATSQAVPS. Residues 151 to 163 show a composition bias toward basic and acidic residues; sequence GKREITDADRQKE. A UIM domain is found at 162-181; it reads KEEEELQMALALSIREKATI. Over residues 182 to 195 the composition is skewed to low complexity; the sequence is APAPQAEASSSAAP. Positions 196–211 are enriched in polar residues; that stretch reads VNQTQAPAATSQAVPS. In terms of domain architecture, SH3 spans 216-275; that stretch reads ATVSRVRALFDFQPSEPGELQFRKGDVIAVLESVYKDWWKGSLRGQTGIFPLNYVEKLPD. Residues 373 to 611 are disordered; sequence PAQSQYGRPA…DVSNPASFYR (239 aa). 2 stretches are compositionally biased toward low complexity: residues 388 to 397 and 452 to 472; these read YPGAAPVGYP and APYQQPQPQQQRQPSSESYQP. Positions 480–492 are enriched in polar residues; that stretch reads TYENPQELGTSVY. Low complexity predominate over residues 509 to 534; it reads AVQVPAAVQQHFQQQQQQPQQQSQQP. Residues 558-575 show a composition bias toward pro residues; it reads PPYPSHQPPPMHQPPPVP. Residues 596-611 show a composition bias toward polar residues; the sequence is YNPSQTDVSNPASFYR.

The protein belongs to the STAM family. Component of the ESCRT-0 complex composed of HSE1 and VPS27.

It is found in the endosome membrane. Functionally, component of the ESCRT-0 complex which is the sorting receptor for ubiquitinated cargo proteins at the multivesicular body (MVB). This chain is Class E vacuolar protein-sorting machinery protein hse1 (hse1), found in Aspergillus niger (strain ATCC MYA-4892 / CBS 513.88 / FGSC A1513).